The chain runs to 331 residues: Protoheme IX farnesyltransferase (331 aa).

Helical transmembrane passes span 22 to 42 (LVKP…MWMA), 50 to 70 (FGVT…INMV), 100 to 120 (FAGI…NLLA), 147 to 167 (IVIG…AATG), 174 to 194 (WVMF…LAIL), 220 to 240 (ILLY…PLHV), 241 to 261 (LGSF…WKAV), 273 to 293 (ATSL…AMGL), and 307 to 327 (LASL…LGAM).

This sequence belongs to the UbiA prenyltransferase family. Protoheme IX farnesyltransferase subfamily.

The protein localises to the cell inner membrane. The catalysed reaction is heme b + (2E,6E)-farnesyl diphosphate + H2O = Fe(II)-heme o + diphosphate. It participates in porphyrin-containing compound metabolism; heme O biosynthesis; heme O from protoheme: step 1/1. Converts heme B (protoheme IX) to heme O by substitution of the vinyl group on carbon 2 of heme B porphyrin ring with a hydroxyethyl farnesyl side group. This Synechococcus sp. (strain JA-3-3Ab) (Cyanobacteria bacterium Yellowstone A-Prime) protein is Protoheme IX farnesyltransferase.